The following is a 398-amino-acid chain: MKILVLNCGSSSIKYQLLDMETESVLAIGKVERVGMEDAIFEYKGAGEKIKEIGTILDHTAGVRKVLKALTDPVHGVIQAPEEIAAVGHRVVHGGEAFVKSVIITDEVKRTLRELFDLAPLHNPANLTGILAAEAALPHAPGVAVFDTAFHATMPRKAFLYALPYAMYKGHKVRRYGFHGTSHKYVSQRAADLLGRPLEEVNLITCHLGNGSSVTAVQGGKSVDTSMGFTPLAGLIMGTRAGDLDPGVIPYIMAREEIGISEVNSMLNKHSGILGISGISSDMRQIEEEMEKGDPRAVETFEMMEYRLRKYIGAYAAVLGRVDGIVFTGGIGENSPLFRKAVCQNLGFLGVTFDEEANNCRGQERIISGPDSKVAVMVIPTNEELMIARETAELIRNR.

Residue Asn-7 coordinates Mg(2+). Residue Lys-14 participates in ATP binding. Arg-90 is a substrate binding site. Residue Asp-147 is the Proton donor/acceptor of the active site. ATP contacts are provided by residues 207–211 (HLGNG), 282–284 (DMR), and 330–334 (GIGEN). Glu-383 contacts Mg(2+).

Belongs to the acetokinase family. As to quaternary structure, homodimer. The cofactor is Mg(2+). It depends on Mn(2+) as a cofactor.

It localises to the cytoplasm. The catalysed reaction is acetate + ATP = acetyl phosphate + ADP. Its pathway is metabolic intermediate biosynthesis; acetyl-CoA biosynthesis; acetyl-CoA from acetate: step 1/2. Functionally, catalyzes the formation of acetyl phosphate from acetate and ATP. Can also catalyze the reverse reaction. In Symbiobacterium thermophilum (strain DSM 24528 / JCM 14929 / IAM 14863 / T), this protein is Acetate kinase.